Consider the following 721-residue polypeptide: Procollagen-lysine,2-oxoglutarate 5-dioxygenase (721 aa).

A signal peptide spans 1 to 21 (MRIQQSALLLLLLAVTSQGDA). Residues N504, N530, and N536 are each glycosylated (N-linked (GlcNAc...) asparagine). The 95-residue stretch at 627–721 (NPPRALMNFM…RYIMISFIDP (95 aa)) folds into the Fe2OG dioxygenase domain. Fe cation-binding residues include H650 and D652. N-linked (GlcNAc...) asparagine glycosylation is present at N680. H702 is a Fe cation binding site. The N-linked (GlcNAc...) asparagine glycan is linked to N709. Residue R712 participates in 2-oxoglutarate binding.

It depends on L-ascorbate as a cofactor. The cofactor is Fe(2+).

The protein resides in the endoplasmic reticulum. The protein localises to the secreted. It localises to the extracellular space. It carries out the reaction L-lysyl-[collagen] + 2-oxoglutarate + O2 = (5R)-5-hydroxy-L-lysyl-[collagen] + succinate + CO2. Forms hydroxylysine residues in collagen type IV. Required for the secretion of collagen type IV (vkg) from haemocytes, fat body and follicle cells. The sequence is that of Procollagen-lysine,2-oxoglutarate 5-dioxygenase from Drosophila melanogaster (Fruit fly).